The following is a 249-amino-acid chain: Acetylglutamate kinase (249 aa).

Residues 36 to 37, arginine 58, and asparagine 147 contribute to the substrate site; that span reads GG.

It belongs to the acetylglutamate kinase family. ArgB subfamily.

The protein resides in the cytoplasm. The catalysed reaction is N-acetyl-L-glutamate + ATP = N-acetyl-L-glutamyl 5-phosphate + ADP. Its pathway is amino-acid biosynthesis; L-arginine biosynthesis; N(2)-acetyl-L-ornithine from L-glutamate: step 2/4. In terms of biological role, catalyzes the ATP-dependent phosphorylation of N-acetyl-L-glutamate. The polypeptide is Acetylglutamate kinase (Thermus thermophilus (strain ATCC 27634 / DSM 579 / HB8)).